The primary structure comprises 136 residues: MAKSDVKGVNLGMGTGRRKSSVARVYIREGKGDIKINHKNFDVYMQLEKLKTIALSPLALTHTLGKYDIYINVYGGGISGQAGAIRHGIARALFDLDEEYKMVLKSNGFLTRDSRKVERKKFGKKKARKSFQFSKR.

The protein belongs to the universal ribosomal protein uS9 family.

In Borrelia duttonii (strain Ly), this protein is Small ribosomal subunit protein uS9.